The chain runs to 921 residues: GPI ethanolamine phosphate transferase 1 (921 aa).

At 1–9 (MKNNTRFTL) the chain is on the cytoplasmic side. The helical transmembrane segment at 10 to 30 (IVVGVLFHLLYLWSIFDIYFI) threads the bilayer. Over 31 to 457 (SPLVHGMEQK…TTYNWRFIRT (427 aa)) the chain is Lumenal. Residues Asn-90, Asn-138, Asn-198, Asn-262, and Asn-286 are each glycosylated (N-linked (GlcNAc...) asparagine). Residues 458 to 478 (IVTFGFLGWICYSFMIFLKLF) form a helical membrane-spanning segment. Residues 479-488 (ILNNSQTTHP) lie on the Cytoplasmic side of the membrane. Residues 489–509 (SILNISIFTSLGLILNYILFY) form a helical membrane-spanning segment. Topologically, residues 510-516 (QKSPLNF) are lumenal. A helical membrane pass occupies residues 517–537 (YLYLIFPLFFWSKIFSNTAII). At 538 to 552 (RDGVNEFFKGISKAE) the chain is on the cytoplasmic side. Residues 553 to 573 (SVIIGLTIISIYEGIVYGFFH) form a helical membrane-spanning segment. Over 574–575 (RW) the chain is Lumenal. Residues 576 to 596 (ILSLILVSFAFYPLVCGVTDL) form a helical membrane-spanning segment. Topologically, residues 597–599 (FTN) are cytoplasmic. A helical transmembrane segment spans residues 600–620 (LLWILTSVGLSSFTLLDAVKI). A topological domain (lumenal) is located at residue Glu-621. Residues 622–642 (NLQQIQVAGILIVLSSAYAVM) traverse the membrane as a helical segment. Topologically, residues 643-654 (RLSQDISKYTQH) are cytoplasmic. The chain crosses the membrane as a helical span at residues 655–675 (LLSIQIFLVSGMLHFTSKSVI). Topologically, residues 676–684 (SLQKREGLP) are lumenal. A helical transmembrane segment spans residues 685–705 (AFAQVGGWAILVISLTIMPFL). Topologically, residues 706 to 728 (HYLKPNNNYQVRLLTIYLTFAPS) are cytoplasmic. The helical transmembrane segment at 729–749 (FIILSISFEALFYFIFTAYIV) threads the bilayer. At 750-777 (QWLQIEKNIKVLKDEQKSDSNGIQLLRV) the chain is on the lumenal side. Residues 778–798 (AIIGFFLQQIAFFGTGNVASI) form a helical membrane-spanning segment. The Cytoplasmic segment spans residues 799 to 819 (SSFSLDSVYRLLPVFDPFPMG). Residues 820–840 (ALLMLKLIIPYVLLSCGLGIM) form a helical membrane-spanning segment. Over 841–849 (NIQLDIKDY) the chain is Lumenal. A helical membrane pass occupies residues 850–870 (TISSLIISTSDILSLNFFYLL). The Cytoplasmic segment spans residues 871 to 878 (KTEGSWLD). A helical transmembrane segment spans residues 879 to 899 (IGVTISNYCLAILSSLFMLIL). Topologically, residues 900–921 (EIVGHQLLKNVTRATSSQKKTN) are lumenal. Residue Asn-909 is glycosylated (N-linked (GlcNAc...) asparagine).

The protein belongs to the PIGG/PIGN/PIGO family. PIGN subfamily.

Its subcellular location is the endoplasmic reticulum membrane. The protein operates within glycolipid biosynthesis; glycosylphosphatidylinositol-anchor biosynthesis. Its function is as follows. Ethanolamine phosphate transferase involved in glycosylphosphatidylinositol-anchor biosynthesis. Transfers ethanolamine phosphate to the first alpha-1,4-linked mannose of the glycosylphosphatidylinositol precursor of GPI-anchor. The polypeptide is GPI ethanolamine phosphate transferase 1 (MCD4) (Candida glabrata (strain ATCC 2001 / BCRC 20586 / JCM 3761 / NBRC 0622 / NRRL Y-65 / CBS 138) (Yeast)).